The chain runs to 180 residues: Protein GrpE (180 aa).

A disordered region spans residues Met1–Ser25.

This sequence belongs to the GrpE family. As to quaternary structure, homodimer.

The protein resides in the cytoplasm. Its function is as follows. Participates actively in the response to hyperosmotic and heat shock by preventing the aggregation of stress-denatured proteins, in association with DnaK and GrpE. It is the nucleotide exchange factor for DnaK and may function as a thermosensor. Unfolded proteins bind initially to DnaJ; upon interaction with the DnaJ-bound protein, DnaK hydrolyzes its bound ATP, resulting in the formation of a stable complex. GrpE releases ADP from DnaK; ATP binding to DnaK triggers the release of the substrate protein, thus completing the reaction cycle. Several rounds of ATP-dependent interactions between DnaJ, DnaK and GrpE are required for fully efficient folding. The chain is Protein GrpE from Fructilactobacillus sanfranciscensis (Lactobacillus sanfranciscensis).